Consider the following 230-residue polypeptide: Sugar fermentation stimulation protein homolog (230 aa).

It belongs to the SfsA family.

This Clostridium botulinum (strain Loch Maree / Type A3) protein is Sugar fermentation stimulation protein homolog.